The chain runs to 494 residues: DUF21 domain-containing protein At4g14240 (494 aa).

The Extracellular portion of the chain corresponds to 1–43; it reads MHLINAVAAARILSGIGQSNGNNGGEAIPFGSFEWITYAGISC. The CNNM transmembrane domain maps to 31–213; sequence GSFEWITYAG…GKGGELTHDE (183 aa). The helical transmembrane segment at 44-64 threads the bilayer; sequence FLVLFAGIMSGLTLGLMSLGL. Residues 65-93 lie on the Cytoplasmic side of the membrane; that stretch reads VELEILQRSGTPNEKKQAAAIFPVVQKQH. The chain crosses the membrane as a helical span at residues 94–114; that stretch reads QLLVTLLLCNAMAMEGLPIYL. The Extracellular segment spans residues 115–121; sequence DKLFNEY. Residues 122–142 traverse the membrane as a helical segment; that stretch reads VAIILSVTFVLAFGEVIPQAI. Over 143–159 the chain is Cytoplasmic; it reads CTRYGLAVGANFVWLVR. The helical transmembrane segment at 160–180 threads the bilayer; it reads ILMTLCYPIAFPIGKILDLVL. The Extracellular portion of the chain corresponds to 181–494; that stretch reads GHNDALFRRA…TITEPIRRNN (314 aa). 3 consecutive CBS domains span residues 232–292, 297–352, and 364–425; these read MTPI…TETL, CIRR…SNDS, and GNHD…IVDE. N-linked (GlcNAc...) asparagine glycans are attached at residues asparagine 350 and asparagine 385. The interval 459–494 is disordered; it reads QKGTGGQNKQGQTNKVPGQEQDKMLGTITEPIRRNN.

The protein localises to the membrane. This Arabidopsis thaliana (Mouse-ear cress) protein is DUF21 domain-containing protein At4g14240 (CBSDUF1).